We begin with the raw amino-acid sequence, 342 residues long: MESKRMEEPYFTFGIIADIQYADMDNRFNYLKTSMRYYRNSLTQLKAAVEEWAMESIKPAFILQLGDIIDGINTKDKSSKTALERVLVEMDKLPIQFHHVWGNHEFYNFSREYLNGSKLNSQARGDRIDRGGGTSENGEFNDESFYAYHFSPCPKFRFLLIDGYDLSPIGREKTSPKYDIALNLLKEKNPNEDLNSPTGLEEVQFVLFNGGISPSQLDWMERVLTSSDEKEENVFVVSHLPVHPDAADPMCLVWNYPEVLSVLQSHPCVVGYLAGHNHEGRYCMDPYGIHHLTFSGVIETPPESRAFGTMYVYEDKMVLKGRGLVEDRTLYYRDPKNKAERH.

Zn(2+) is bound by residues D18, Q20, D67, N103, H239, H276, and H278.

Belongs to the ADPRibase-Mn family. As to quaternary structure, monomer. Requires Mg(2+) as cofactor.

It carries out the reaction CDP-choline + H2O = phosphocholine + CMP + 2 H(+). The enzyme catalyses ADP-D-ribose + H2O = D-ribose 5-phosphate + AMP + 2 H(+). The catalysed reaction is CDP-glycerol + H2O = sn-glycerol 3-phosphate + CMP + 2 H(+). In terms of biological role, hydrolyzes ADP-ribose, IDP-ribose, CDP-glycerol, CDP-choline and CDP-ethanolamine, but not other non-reducing ADP-sugars or CDP-glucose. The chain is Manganese-dependent ADP-ribose/CDP-alcohol diphosphatase (adprm) from Xenopus tropicalis (Western clawed frog).